The primary structure comprises 122 residues: MIQMQTNLEVADNSGARRVMCIKVLGGAGRRYASVGDVIVVSVKEAIPRGRVKKGDVLRAVVVRVNQGMKRKDGSLIRFDKNAAVIVNKQSEPVGTRIFGPVPRELRAKNHMKIISLAPEVL.

This sequence belongs to the universal ribosomal protein uL14 family. In terms of assembly, part of the 50S ribosomal subunit. Forms a cluster with proteins L3 and L19. In the 70S ribosome, L14 and L19 interact and together make contacts with the 16S rRNA in bridges B5 and B8.

In terms of biological role, binds to 23S rRNA. Forms part of two intersubunit bridges in the 70S ribosome. The polypeptide is Large ribosomal subunit protein uL14 (Caulobacter sp. (strain K31)).